The following is a 281-amino-acid chain: MASARDIRRRIRGVRNMQQITKAMKMVAASKLRKAQEKVIAARPYARQLQEVLARLAQDQADVTHPLLMERPVQRVGYIIITSDRGLCGGYNTNLIRMTNSSIAEETHDVRLVAVGRKGRDFYRRGKIETIAEFVGLGDNPSYGQAKEIAQEVIGLYESGELDEVYLLYNEFVSAISQRPTRIKLLPIEKPKQVSNTEYIFEPSAEEILTTLLPKYVETQVFRTLLEGKASEMGAKMTAMGAATDNAKEAIERLTLQLNRARQAAITTEISEIVGGASALE.

Belongs to the ATPase gamma chain family. F-type ATPases have 2 components, CF(1) - the catalytic core - and CF(0) - the membrane proton channel. CF(1) has five subunits: alpha(3), beta(3), gamma(1), delta(1), epsilon(1). CF(0) has three main subunits: a, b and c.

It is found in the cell membrane. Functionally, produces ATP from ADP in the presence of a proton gradient across the membrane. The gamma chain is believed to be important in regulating ATPase activity and the flow of protons through the CF(0) complex. This chain is ATP synthase gamma chain, found in Desulfitobacterium hafniense (strain DSM 10664 / DCB-2).